Here is a 473-residue protein sequence, read N- to C-terminus: Photosystem II CP43 reaction center protein (473 aa).

The propeptide occupies 1 to 14 (MKTLYSLRRFYPVE). Position 15 is an N-acetylthreonine (threonine 15). Threonine 15 carries the phosphothreonine modification. 5 helical membrane-spanning segments follow: residues 69 to 93 (LFEV…PHLA), 134 to 155 (LLGP…KDRN), 178 to 200 (KALY…RKIT), 255 to 275 (KPFA…LSYS), and 291 to 312 (WFNN…ASQA). [CaMn4O5] cluster is bound at residue glutamate 367. A helical membrane pass occupies residues 447–471 (RARAAAAGFEKGIDRDFEPVLSMTP).

This sequence belongs to the PsbB/PsbC family. PsbC subfamily. PSII is composed of 1 copy each of membrane proteins PsbA, PsbB, PsbC, PsbD, PsbE, PsbF, PsbH, PsbI, PsbJ, PsbK, PsbL, PsbM, PsbT, PsbX, PsbY, PsbZ, Psb30/Ycf12, at least 3 peripheral proteins of the oxygen-evolving complex and a large number of cofactors. It forms dimeric complexes. It depends on Binds multiple chlorophylls and provides some of the ligands for the Ca-4Mn-5O cluster of the oxygen-evolving complex. It may also provide a ligand for a Cl- that is required for oxygen evolution. PSII binds additional chlorophylls, carotenoids and specific lipids. as a cofactor.

It is found in the plastid. The protein resides in the chloroplast thylakoid membrane. Its function is as follows. One of the components of the core complex of photosystem II (PSII). It binds chlorophyll and helps catalyze the primary light-induced photochemical processes of PSII. PSII is a light-driven water:plastoquinone oxidoreductase, using light energy to abstract electrons from H(2)O, generating O(2) and a proton gradient subsequently used for ATP formation. The protein is Photosystem II CP43 reaction center protein of Helianthus annuus (Common sunflower).